A 472-amino-acid polypeptide reads, in one-letter code: Glycogen synthase (472 aa).

ADP-alpha-D-glucose is bound at residue K16.

The protein belongs to the glycosyltransferase 1 family. Bacterial/plant glycogen synthase subfamily.

The enzyme catalyses [(1-&gt;4)-alpha-D-glucosyl](n) + ADP-alpha-D-glucose = [(1-&gt;4)-alpha-D-glucosyl](n+1) + ADP + H(+). It participates in glycan biosynthesis; glycogen biosynthesis. Functionally, synthesizes alpha-1,4-glucan chains using ADP-glucose. This chain is Glycogen synthase, found in Jannaschia sp. (strain CCS1).